The following is a 480-amino-acid chain: Aromatic-L-amino-acid decarboxylase (480 aa).

Lysine 292 is subject to N6-(pyridoxal phosphate)lysine.

It belongs to the group II decarboxylase family. Pyridoxal 5'-phosphate is required as a cofactor.

The catalysed reaction is L-tryptophan + H(+) = tryptamine + CO2. It catalyses the reaction L-phenylalanine + H(+) = 2-phenylethylamine + CO2. It carries out the reaction 5-hydroxy-L-tryptophan + H(+) = serotonin + CO2. The enzyme catalyses L-dopa + H(+) = dopamine + CO2. In terms of biological role, involved in bacillamide C biosynthesis. Catalyzes the decarboxylation of L-tryptophan to tryptamine. The tryptamine obtained is then probably incorporated into the bacillamide C peptide, which is derived from the amino acids alanine, cysteine and tryptophan through nonribosomal peptide synthetase (NRPS) biosynthesis strategy. L-tryptophan is the best substrate, but the enzyme displays broad substrate specificity for various aromatic amino acids in vitro and it can also catalyze the decarboxylation of L-phenylalanine, 5-hydroxy-L-tryptophan (L-HTP) and L-DOPA, with lower efficiency. Exhibits weak activity with L-tyrosine. This chain is Aromatic-L-amino-acid decarboxylase, found in Bacillus atrophaeus.